Reading from the N-terminus, the 467-residue chain is Light-independent protochlorophyllide reductase subunit N (467 aa).

Residues Cys23, Cys48, and Cys108 each contribute to the [4Fe-4S] cluster site.

Belongs to the BchN/ChlN family. As to quaternary structure, protochlorophyllide reductase is composed of three subunits; ChlL, ChlN and ChlB. Forms a heterotetramer of two ChlB and two ChlN subunits. It depends on [4Fe-4S] cluster as a cofactor.

It carries out the reaction chlorophyllide a + oxidized 2[4Fe-4S]-[ferredoxin] + 2 ADP + 2 phosphate = protochlorophyllide a + reduced 2[4Fe-4S]-[ferredoxin] + 2 ATP + 2 H2O. The protein operates within porphyrin-containing compound metabolism; chlorophyll biosynthesis (light-independent). Its function is as follows. Component of the dark-operative protochlorophyllide reductase (DPOR) that uses Mg-ATP and reduced ferredoxin to reduce ring D of protochlorophyllide (Pchlide) to form chlorophyllide a (Chlide). This reaction is light-independent. The NB-protein (ChlN-ChlB) is the catalytic component of the complex. This chain is Light-independent protochlorophyllide reductase subunit N, found in Trichormus variabilis (strain ATCC 29413 / PCC 7937) (Anabaena variabilis).